The following is a 387-amino-acid chain: 8-amino-7-oxononanoate synthase (387 aa).

Arginine 20 provides a ligand contact to substrate. 107-108 (GY) serves as a coordination point for pyridoxal 5'-phosphate. Position 132 (histidine 132) interacts with substrate. Residues serine 181, histidine 209, and threonine 238 each contribute to the pyridoxal 5'-phosphate site. Lysine 241 is modified (N6-(pyridoxal phosphate)lysine). Threonine 355 contributes to the substrate binding site.

This sequence belongs to the class-II pyridoxal-phosphate-dependent aminotransferase family. BioF subfamily. Homodimer. It depends on pyridoxal 5'-phosphate as a cofactor.

It catalyses the reaction 6-carboxyhexanoyl-[ACP] + L-alanine + H(+) = (8S)-8-amino-7-oxononanoate + holo-[ACP] + CO2. The protein operates within cofactor biosynthesis; biotin biosynthesis. In terms of biological role, catalyzes the decarboxylative condensation of pimeloyl-[acyl-carrier protein] and L-alanine to produce 8-amino-7-oxononanoate (AON), [acyl-carrier protein], and carbon dioxide. This chain is 8-amino-7-oxononanoate synthase, found in Dechloromonas aromatica (strain RCB).